Consider the following 109-residue polypeptide: Putative pterin-4-alpha-carbinolamine dehydratase (109 aa).

This sequence belongs to the pterin-4-alpha-carbinolamine dehydratase family.

The enzyme catalyses (4aS,6R)-4a-hydroxy-L-erythro-5,6,7,8-tetrahydrobiopterin = (6R)-L-erythro-6,7-dihydrobiopterin + H2O. This is Putative pterin-4-alpha-carbinolamine dehydratase from Rickettsia canadensis (strain McKiel).